We begin with the raw amino-acid sequence, 314 residues long: 4-hydroxy-3-methylbut-2-enyl diphosphate reductase (314 aa).

C12 is a binding site for [4Fe-4S] cluster. 2 residues coordinate (2E)-4-hydroxy-3-methylbut-2-enyl diphosphate: H41 and H74. Positions 41 and 74 each coordinate dimethylallyl diphosphate. Isopentenyl diphosphate is bound by residues H41 and H74. Residue C96 participates in [4Fe-4S] cluster binding. H124 is a binding site for (2E)-4-hydroxy-3-methylbut-2-enyl diphosphate. H124 lines the dimethylallyl diphosphate pocket. H124 serves as a coordination point for isopentenyl diphosphate. E126 (proton donor) is an active-site residue. Residue T167 participates in (2E)-4-hydroxy-3-methylbut-2-enyl diphosphate binding. C197 is a [4Fe-4S] cluster binding site. The (2E)-4-hydroxy-3-methylbut-2-enyl diphosphate site is built by S225, S226, N227, and S269. Dimethylallyl diphosphate contacts are provided by S225, S226, N227, and S269. The isopentenyl diphosphate site is built by S225, S226, N227, and S269.

The protein belongs to the IspH family. Requires [4Fe-4S] cluster as cofactor.

The enzyme catalyses isopentenyl diphosphate + 2 oxidized [2Fe-2S]-[ferredoxin] + H2O = (2E)-4-hydroxy-3-methylbut-2-enyl diphosphate + 2 reduced [2Fe-2S]-[ferredoxin] + 2 H(+). It catalyses the reaction dimethylallyl diphosphate + 2 oxidized [2Fe-2S]-[ferredoxin] + H2O = (2E)-4-hydroxy-3-methylbut-2-enyl diphosphate + 2 reduced [2Fe-2S]-[ferredoxin] + 2 H(+). Its pathway is isoprenoid biosynthesis; dimethylallyl diphosphate biosynthesis; dimethylallyl diphosphate from (2E)-4-hydroxy-3-methylbutenyl diphosphate: step 1/1. It participates in isoprenoid biosynthesis; isopentenyl diphosphate biosynthesis via DXP pathway; isopentenyl diphosphate from 1-deoxy-D-xylulose 5-phosphate: step 6/6. Its function is as follows. Catalyzes the conversion of 1-hydroxy-2-methyl-2-(E)-butenyl 4-diphosphate (HMBPP) into a mixture of isopentenyl diphosphate (IPP) and dimethylallyl diphosphate (DMAPP). Acts in the terminal step of the DOXP/MEP pathway for isoprenoid precursor biosynthesis. The protein is 4-hydroxy-3-methylbut-2-enyl diphosphate reductase of Haemophilus influenzae (strain ATCC 51907 / DSM 11121 / KW20 / Rd).